The primary structure comprises 511 residues: Maturase K (511 aa).

This sequence belongs to the intron maturase 2 family. MatK subfamily.

It is found in the plastid. The protein localises to the chloroplast. Usually encoded in the trnK tRNA gene intron. Probably assists in splicing its own and other chloroplast group II introns. The chain is Maturase K from Anchomanes difformis (Amorphophallus difformis).